The sequence spans 481 residues: Palmitoyltransferase PFA4 (481 aa).

Residues 1–22 (MTNQDPDDGAYPSSQSDDDGIE) are disordered. Topologically, residues 1–66 (MTNQDPDDGA…APLTGRRRTP (66 aa)) are cytoplasmic. A helical membrane pass occupies residues 67-87 (LSWTEVIWVSLTLLLIAVLGY). Topologically, residues 88–108 (SSQLYVMLPYYEKTPSFSPQA) are lumenal. The chain crosses the membrane as a helical span at residues 109-129 (LAAVLVPFNLGLLAIYYNYWL). The Cytoplasmic segment spans residues 130-223 (CVTTDAGSVP…LANCVGHFNH (94 aa)). Positions 181–231 (RYCKTCSAFKPPRSHHCKTCQRCVLRMDHHCPWLANCVGHFNHAHFIRFLF) constitute a DHHC domain. C211 acts as the S-palmitoyl cysteine intermediate in catalysis. The helical transmembrane segment at 224–244 (AHFIRFLFYVDVTCLYHLIMI) threads the bilayer. Over 245–265 (SCRVLDSFNSYTYWREPCARE) the chain is Lumenal. A helical membrane pass occupies residues 266 to 286 (LVWLVVNYALCIPVILLVGIF). Over 287-481 (SLYHFYCLAV…EVRPHTPWSV (195 aa)) the chain is Cytoplasmic. Residues 370–481 (SQYRWPPKDP…EVRPHTPWSV (112 aa)) form a disordered region. Over residues 418-431 (SSPSSSDSHSSLHL) the composition is skewed to low complexity. 2 stretches are compositionally biased toward basic and acidic residues: residues 441 to 452 (LPHHFDPPHDPD) and 466 to 475 (RGSEGYEVRP).

It belongs to the DHHC palmitoyltransferase family. PFA4 subfamily.

The protein localises to the endoplasmic reticulum membrane. It carries out the reaction L-cysteinyl-[protein] + hexadecanoyl-CoA = S-hexadecanoyl-L-cysteinyl-[protein] + CoA. Functionally, mediates the reversible addition of palmitate to target proteins, thereby regulating their membrane association and biological function. In Mycosarcoma maydis (Corn smut fungus), this protein is Palmitoyltransferase PFA4.